Here is a 591-residue protein sequence, read N- to C-terminus: DEAD-box ATP-dependent RNA helicase 35 (591 aa).

The short motif at 146–174 (KNFKDMKFPRPVLDTLKEKGIVQPTPIQV) is the Q motif element. Positions 177–361 (LPVILAGRDM…RSALVKPVTV (185 aa)) constitute a Helicase ATP-binding domain. 190–197 (AFTGSGKT) contributes to the ATP binding site. Positions 309–312 (DEAD) match the DEAD box motif. A Helicase C-terminal domain is found at 372-532 (DVIQEVEYVK…RIPPVLAELN (161 aa)). The segment at 548 to 565 (KGCAYCGGLGHRIRDCPK) adopts a CCHC-type zinc-finger fold.

The protein belongs to the DEAD box helicase family. DDX41 subfamily.

It catalyses the reaction ATP + H2O = ADP + phosphate + H(+). The chain is DEAD-box ATP-dependent RNA helicase 35 (RH35) from Arabidopsis thaliana (Mouse-ear cress).